Consider the following 228-residue polypeptide: Small ribosomal subunit protein uS3 (228 aa).

A KH type-2 domain is found at 39-107; the sequence is VRAYLQDKLK…PVHINIEEIR (69 aa).

Belongs to the universal ribosomal protein uS3 family. As to quaternary structure, part of the 30S ribosomal subunit. Forms a tight complex with proteins S10 and S14.

In terms of biological role, binds the lower part of the 30S subunit head. Binds mRNA in the 70S ribosome, positioning it for translation. The polypeptide is Small ribosomal subunit protein uS3 (Ectopseudomonas mendocina (strain ymp) (Pseudomonas mendocina)).